We begin with the raw amino-acid sequence, 339 residues long: 5-dehydro-2-deoxygluconokinase (339 aa).

Belongs to the carbohydrate kinase PfkB family.

It catalyses the reaction 5-dehydro-2-deoxy-D-gluconate + ATP = 6-phospho-5-dehydro-2-deoxy-D-gluconate + ADP + H(+). The protein operates within polyol metabolism; myo-inositol degradation into acetyl-CoA; acetyl-CoA from myo-inositol: step 5/7. Catalyzes the phosphorylation of 5-dehydro-2-deoxy-D-gluconate (2-deoxy-5-keto-D-gluconate or DKG) to 6-phospho-5-dehydro-2-deoxy-D-gluconate (DKGP). The chain is 5-dehydro-2-deoxygluconokinase from Clostridium botulinum (strain Eklund 17B / Type B).